Reading from the N-terminus, the 804-residue chain is Leucine--tRNA ligase (804 aa).

A 'HIGH' region motif is present at residues 40–51 (PYPSGAGLHVGH). The short motif at 576–580 (KMSKS) is the 'KMSKS' region element. Position 579 (Lys579) interacts with ATP.

Belongs to the class-I aminoacyl-tRNA synthetase family.

It is found in the cytoplasm. It carries out the reaction tRNA(Leu) + L-leucine + ATP = L-leucyl-tRNA(Leu) + AMP + diphosphate. This Staphylococcus epidermidis (strain ATCC 35984 / DSM 28319 / BCRC 17069 / CCUG 31568 / BM 3577 / RP62A) protein is Leucine--tRNA ligase.